The chain runs to 321 residues: Protein-L-histidine N-pros-methyltransferase (321 aa).

Residues 1-24 (MRLWLCWLGCYTLLLWALRRRMWA) form the signal peptide. N-linked (GlcNAc...) asparagine glycosylation occurs at asparagine 89. S-adenosyl-L-homocysteine contacts are provided by glutamate 177, asparagine 213, and tyrosine 298.

Belongs to the METTL9 family.

The protein resides in the endoplasmic reticulum. It localises to the mitochondrion. It catalyses the reaction L-histidyl-[protein] + S-adenosyl-L-methionine = N(pros)-methyl-L-histidyl-[protein] + S-adenosyl-L-homocysteine + H(+). Protein-histidine N-methyltransferase that specifically catalyzes 1-methylhistidine (pros-methylhistidine) methylation of target proteins. Mediates methylation of proteins with a His-x-His (HxH) motif (where 'x' is preferably a small amino acid); 1-methylhistidine modification may affect the binding of zinc and other metals to its target proteins. This is Protein-L-histidine N-pros-methyltransferase from Gallus gallus (Chicken).